The following is an 88-amino-acid chain: MSTKNAKPKKEAQRRPSRKAKVKATLGEFDLRDYRNVEVLKRFLSETGKILPRRRTGLSGKEQRILAKTIKRARILGLLPFTEKLVRK.

Residues 1–22 (MSTKNAKPKKEAQRRPSRKAKV) form a disordered region.

The protein belongs to the bacterial ribosomal protein bS18 family. As to quaternary structure, part of the 30S ribosomal subunit. Forms a tight heterodimer with protein bS6.

Its function is as follows. Binds as a heterodimer with protein bS6 to the central domain of the 16S rRNA, where it helps stabilize the platform of the 30S subunit. This chain is Small ribosomal subunit protein bS18 (rpsR), found in Thermus thermophilus.